The following is a 233-amino-acid chain: Germin-like protein (233 aa).

A signal peptide spans methionine 1–alanine 22. Cysteine 32 and cysteine 49 are oxidised to a cystine. Residues arginine 63–serine 215 form the Cupin type-1 domain. Residues histidine 111, histidine 113, glutamate 118, and histidine 162 each contribute to the Mn(2+) site.

The protein belongs to the germin family. In terms of assembly, oligomer (believed to be a pentamer but probably hexamer). Expressed at high levels in unstressed roots.

The protein localises to the secreted. It is found in the extracellular space. Its subcellular location is the apoplast. Its function is as follows. May be involved in seed germination. This chain is Germin-like protein, found in Mesembryanthemum crystallinum (Common ice plant).